The primary structure comprises 375 residues: Alcohol dehydrogenase 1A (375 aa).

Gly-1 carries the post-translational modification N-acetylglycine. Zn(2+) is bound by residues Cys-46, His-67, Cys-97, Cys-100, Cys-103, Cys-111, and Cys-174. Residues 199 to 204, Asp-223, Lys-228, 293 to 295, and Arg-370 each bind NAD(+); these read GLGGVG and VGL.

This sequence belongs to the zinc-containing alcohol dehydrogenase family. Class-I subfamily. As to quaternary structure, multimeric (with different ratios of monomers). Zn(2+) serves as cofactor.

It is found in the cytoplasm. It catalyses the reaction a primary alcohol + NAD(+) = an aldehyde + NADH + H(+). The enzyme catalyses a secondary alcohol + NAD(+) = a ketone + NADH + H(+). The chain is Alcohol dehydrogenase 1A from Saara hardwickii (Indian spiny-tailed lizard).